The sequence spans 647 residues: uncharacterized protein (647 aa).

5 consecutive transmembrane segments (helical) span residues 14-38 (LFPI…LAVW), 61-78 (VVAL…TTLF), 90-110 (LWLT…PAFI), 140-158 (LSAV…VIYW), and 178-195 (VIAL…RSSF).

The protein localises to the cell membrane. This is an uncharacterized protein from Haemophilus influenzae (strain ATCC 51907 / DSM 11121 / KW20 / Rd).